The following is a 299-amino-acid chain: MAAEAAPEWVEKGDNAWPLAAATLVGLQSVPRLVILYGDCGAVGPRTEKDREAFPPNNVLLTLAGAGLLLWMGWTGFNGGAPYAANVDASVTVVNTHLCTATSLLVWLLLDSFVFGRLSVISAVQGMITGLVCVTPAARLVLHKRSRLLARVDDTLAVLHTHGVAGSLSGVLTGLLLLAEPRFARLFFGDDPRYVGLAYAVRDGRAGSGLRQVGVQLAGIAFVVALNVAVTSAVCLAVRVAVPQLAGGGDAIHGEDAYAVWGDGETYEQYSVHGGGSNHGGFPMTANPVASKADEMIWI.

The next 5 helical transmembrane spans lie at 16–36, 59–79, 104–124, 158–178, and 218–238; these read AWPLAAATLVGLQSVPRLVIL, VLLTLAGAGLLLWMGWTGFNG, LLVWLLLDSFVFGRLSVISAV, VLHTHGVAGSLSGVLTGLLLL, and AGIAFVVALNVAVTSAVCLAV.

This sequence belongs to the ammonia transporter channel (TC 1.A.11.2) family.

The protein resides in the membrane. This chain is Putative ammonium transporter 4 member 1 (AMT4-1), found in Oryza sativa subsp. japonica (Rice).